The chain runs to 146 residues: Large ribosomal subunit protein uL15 (146 aa).

The tract at residues 1–52 (MKLSNLSPKAGSKKRRRRVGRGIAAGQGASCGFGMRGQKSRSGTGTKAGFEG) is disordered. A compositionally biased stretch (basic residues) spans 11–20 (GSKKRRRRVG). The span at 23 to 35 (IAAGQGASCGFGM) shows a compositional bias: gly residues.

The protein belongs to the universal ribosomal protein uL15 family. In terms of assembly, part of the 50S ribosomal subunit.

Functionally, binds to the 23S rRNA. The sequence is that of Large ribosomal subunit protein uL15 from Picosynechococcus sp. (strain ATCC 27264 / PCC 7002 / PR-6) (Agmenellum quadruplicatum).